An 807-amino-acid polypeptide reads, in one-letter code: Mechanosensitive cation channel TMEM63A (807 aa).

At 1–51 the chain is on the extracellular side; that stretch reads MTDSPFLELWQSRAVSVREQLGLGDRPNDSYCYNSAKNSTVLQGVTFGGIP. Residue asparagine 38 is glycosylated (N-linked (GlcNAc...) asparagine). Residues 52–74 traverse the membrane as a helical segment; sequence TVLLIDVSCFLFLILVFSIIRRR. Topologically, residues 75–134 are cytoplasmic; the sequence is FWDYGRIALVSEADSEPRFQRLSSTSSSGQQDFENELGCCPWLTAIFRLHDDQILEWCGE. The helical transmembrane segment at 135-167 threads the bilayer; sequence DAIHYLSFQRHIIFLLVVVSFLSLCVILPVNLS. At 168–191 the chain is on the extracellular side; the sequence is GDLLDKDPYSFGRTTIANLQTDND. Residues 192–217 traverse the membrane as a helical segment; the sequence is LLWLHTIFAVIYLFLTVGFMRHHTQS. Residues 218–416 are Cytoplasmic-facing; sequence IKYKEENLVR…CWKNLSIQGL (199 aa). Residues 219–414 form an intracellular linker IL2; confers mechanosensitivity region; the sequence is KYKEENLVRR…DICWKNLSIQ (196 aa). The chain crosses the membrane as a helical span at residues 417–444; sequence RWWLQWLGINFTLFLGLFFLTTPSIILS. Residues 445-462 lie on the Extracellular side of the membrane; that stretch reads TMDKFNVTKPIHALNNPI. The N-linked (GlcNAc...) asparagine glycan is linked to asparagine 450. A helical transmembrane segment spans residues 463–490; the sequence is ISQFFPTLLLWSFSALLPSIVYYSTLLE. Topologically, residues 491–495 are cytoplasmic; the sequence is SHWTK. A helical membrane pass occupies residues 496 to 532; sequence SGENQIMMTKVYIFLIFMVLILPSLGLTSLDFFFRWL. At 533–554 the chain is on the extracellular side; sequence FDKTSSEASIRLECVFLPDQGA. The helical transmembrane segment at 555 to 586 threads the bilayer; the sequence is FFVNYVIASAFIGNGMELLRLPGLILYTFRMI. Residues 555-586 are gating helix; that stretch reads FFVNYVIASAFIGNGMELLRLPGLILYTFRMI. The Cytoplasmic portion of the chain corresponds to 587 to 606; sequence MAKTAADRRNVKQNQAFQYE. A helical transmembrane segment spans residues 607 to 624; that stretch reads FGAMYAWMLCVFTVIMAY. Over 625–628 the chain is Extracellular; the sequence is SITC. A helical transmembrane segment spans residues 629–651; that stretch reads PIIAPFGLIYILLKHMVDRHNLY. Topologically, residues 652–661 are cytoplasmic; the sequence is FIYLPAKLEK. The helical transmembrane segment at 662–689 threads the bilayer; sequence GIHFAAVNQALAAPILCLFWLYFFSFLR. The Extracellular portion of the chain corresponds to 690 to 694; that stretch reads LGMKA. The helical transmembrane segment at 695 to 709 threads the bilayer; it reads PATLFTFLVVLLTIL. Residues 710-807 lie on the Cytoplasmic side of the membrane; that stretch reads VCLAHTCFGY…GSVAAAPQEA (98 aa). Residue serine 739 is modified to Phosphoserine.

This sequence belongs to the CSC1 (TC 1.A.17) family. In terms of assembly, monomer. Post-translationally, N-Glycosylated.

It localises to the lysosome membrane. The protein localises to the early endosome membrane. The protein resides in the cell membrane. The enzyme catalyses Ca(2+)(in) = Ca(2+)(out). Functionally, mechanosensitive cation channel with low conductance and high activation threshold. In contrast to TMEM63B, does not show phospholipid scramblase activity. Acts as a regulator of lysosomal morphology by mediating lysosomal mechanosensitivity. Important for the baby's first breath and respiration throughout life. Upon lung inflation conducts cation currents in alveolar type 1 and 2 cells triggering lamellar body exocytosis and surfactant secretion into airspace. Also acts as an osmosensitive cation channel preferentially activated by hypotonic stress. This is Mechanosensitive cation channel TMEM63A (TMEM63A) from Pongo abelii (Sumatran orangutan).